Here is a 104-residue protein sequence, read N- to C-terminus: L-rhamnose mutarotase (104 aa).

Tyr-18 serves as a coordination point for substrate. The active-site Proton donor is the His-22. Substrate is bound by residues Tyr-41 and 76 to 77 (WW).

This sequence belongs to the rhamnose mutarotase family. Homodimer.

Its subcellular location is the cytoplasm. It catalyses the reaction alpha-L-rhamnose = beta-L-rhamnose. Its pathway is carbohydrate metabolism; L-rhamnose metabolism. Its function is as follows. Involved in the anomeric conversion of L-rhamnose. This is L-rhamnose mutarotase from Klebsiella pneumoniae subsp. pneumoniae (strain ATCC 700721 / MGH 78578).